Reading from the N-terminus, the 232-residue chain is 7-cyano-7-deazaguanine synthase (232 aa).

8–18 (FSGGQDSTTCL) contacts ATP. Residues C187, C196, C199, and C202 each contribute to the Zn(2+) site.

It belongs to the QueC family. Requires Zn(2+) as cofactor.

The enzyme catalyses 7-carboxy-7-deazaguanine + NH4(+) + ATP = 7-cyano-7-deazaguanine + ADP + phosphate + H2O + H(+). It functions in the pathway purine metabolism; 7-cyano-7-deazaguanine biosynthesis. In terms of biological role, catalyzes the ATP-dependent conversion of 7-carboxy-7-deazaguanine (CDG) to 7-cyano-7-deazaguanine (preQ(0)). This is 7-cyano-7-deazaguanine synthase from Photobacterium profundum (strain SS9).